The sequence spans 87 residues: Toxin CngtIII (87 aa).

Residues 1–19 form the signal peptide; that stretch reads MNSLLMITACLVLFGTVWA. In terms of domain architecture, LCN-type CS-alpha/beta spans 20–85; sequence KEGYLVNKST…TYPLPNKTCS (66 aa). 4 cysteine pairs are disulfide-bonded: C31–C84, C35–C60, C44–C65, and C48–C67.

Belongs to the long (4 C-C) scorpion toxin superfamily. Sodium channel inhibitor family. Beta subfamily. Expressed by the venom gland.

It localises to the secreted. Functionally, beta toxins bind voltage-independently at site-4 of sodium channels (Nav) and shift the voltage of activation toward more negative potentials thereby affecting sodium channel activation and promoting spontaneous and repetitive firing. The protein is Toxin CngtIII of Centruroides noxius (Mexican scorpion).